The following is a 227-amino-acid chain: Myogenin (227 aa).

Residues 82–133 (DRRRAATLREKRRLKKVNEAFEALKRSTLLNPNQRLPKVEILRSAIQYIERL) form the bHLH domain. A disordered region spans residues 147–196 (QRELRYRPAAPQPAAPSECGSGSSSCSPEWSTQLEFGTNPADHLLSDDQA). The segment covering 161–175 (APSECGSGSSSCSPE) has biased composition (low complexity).

In terms of assembly, homodimer and heterodimer. Efficient DNA binding requires dimerization with another bHLH protein.

It is found in the nucleus. Acts as a transcriptional activator that promotes transcription of muscle-specific target genes and plays a role in muscle differentiation. Induces fibroblasts to differentiate into myoblasts. Probable sequence specific DNA-binding protein. The polypeptide is Myogenin (MYOG) (Gallus gallus (Chicken)).